The chain runs to 186 residues: Thioredoxin M2, chloroplastic (186 aa).

The transit peptide at M1–V72 directs the protein to the chloroplast. In terms of domain architecture, Thioredoxin spans C73–P186. Residues C110 and C113 each act as nucleophile in the active site. C110 and C113 are joined by a disulfide.

This sequence belongs to the thioredoxin family. Plant M-type subfamily. As to quaternary structure, interacts with G6PD1 and G6PD4. Interacts with PGL3.

It is found in the plastid. The protein resides in the chloroplast stroma. Thiol-disulfide oxidoreductase that may participate in various redox reactions. May activate NADP-malate dehydrogenase. This Arabidopsis thaliana (Mouse-ear cress) protein is Thioredoxin M2, chloroplastic.